The following is a 296-amino-acid chain: Cholesterol ring-cleaving hydrolase IpdA subunit (296 aa).

The protein belongs to the 3-oxoacid CoA-transferase subunit A family. In terms of assembly, heterotetramer composed of 2 IpdA subunits and 2 IpdB subunits.

It catalyses the reaction (3E)-2-(2-carboxylatoethyl)-3-methyl-6-oxocyclohex-1-ene-1-carboxyl-CoA + H2O = 6-methyl-3,7-dioxodecanedioyl-CoA. The protein operates within steroid metabolism; cholesterol degradation. Its function is as follows. Involved in the final steps of cholesterol and steroid degradation. Opens the last steroid ring of cholesterol by catalyzing the hydrolysis of (3E)-2-(2-carboxylatoethyl)-3-methyl-6-oxocyclohex-1-ene-1-carboxyl-CoA (COCHEA-CoA) to 6-methyl-3,7-dioxodecanedioyl-CoA (MeDODA-CoA). In Rhodococcus jostii (strain RHA1), this protein is Cholesterol ring-cleaving hydrolase IpdA subunit.